We begin with the raw amino-acid sequence, 447 residues long: Omega-6 fatty acid desaturase, chloroplastic (447 aa).

The N-terminal 65 residues, methionine 1–alanine 65, are a transit peptide targeting the chloroplast. Valine 66 carries the N-acetylvaline modification. The short motif at histidine 171–histidine 175 is the Histidine box-1 element. The Histidine box-2 signature appears at histidine 207 to histidine 211. The Histidine box-3 signature appears at histidine 367 to histidine 371.

The protein belongs to the fatty acid desaturase type 1 family.

The protein resides in the plastid. The protein localises to the chloroplast membrane. It carries out the reaction a (9Z)-octadecenoyl-containing glycerolipid + 2 reduced [2Fe-2S]-[ferredoxin] + O2 + 2 H(+) = a (9Z,12Z)-octadecadienoyl-containing glycerolipid + 2 oxidized [2Fe-2S]-[ferredoxin] + 2 H2O. Its pathway is lipid metabolism; polyunsaturated fatty acid biosynthesis. Functionally, chloroplast omega-6 fatty acid desaturase introduces the second double bond in the biosynthesis of 16:3 and 18:3 fatty acids, important constituents of plant membranes. It is thought to use ferredoxin as an electron donor and to act on fatty acids esterified to galactolipids, sulfolipids and phosphatidylglycerol. This is Omega-6 fatty acid desaturase, chloroplastic from Spinacia oleracea (Spinach).